A 450-amino-acid polypeptide reads, in one-letter code: Probable ECA polymerase (450 aa).

11 consecutive transmembrane segments (helical) span residues 6–26 (FSGL…LTWF), 37–57 (VFFS…TSVL), 63–83 (VGVA…CFYA), 118–138 (VILM…NGFL), 155–175 (GVAL…VYFL), 181–201 (AWLF…MIVG), 207–227 (IIIA…ISLW), 228–248 (MLAA…LKRY), 341–361 (LVVM…GLII), 378–398 (YKAA…IVLA), and 410–430 (VFFI…YWLF).

Belongs to the WzyE family. Probably part of a complex composed of WzxE, WzyE and WzzE.

Its subcellular location is the cell inner membrane. The protein operates within bacterial outer membrane biogenesis; enterobacterial common antigen biosynthesis. In terms of biological role, probably involved in the polymerization of enterobacterial common antigen (ECA) trisaccharide repeat units. This Shigella flexneri protein is Probable ECA polymerase.